Reading from the N-terminus, the 434-residue chain is Indole diterpene prenyltransferase nodD2 (434 aa).

L-tryptophan-binding positions include 85-86 (LI) and E94. Substrate contacts are provided by R107, K194, R268, K270, Y272, Q351, Y353, Y418, and Y422.

It belongs to the tryptophan dimethylallyltransferase family.

Its pathway is secondary metabolite biosynthesis. Indole diterpene prenyltransferase; part of the gene cluster that mediates the biosynthesis of the indole diterpenes nodulisporic acids (NA). Nodulisporic acid A (NAA) and its chemically modified derivatives are of particular significance because of their highly potent insecticidal activity against blood-feeding arthropods and lack of observable adverse effects on mammals, in particular the tremogenicity associated with the paspaline-derived IDTs is not observed. The geranylgeranyl diphosphate (GGPP) synthase ggs1, localized outside of the cluster, is proposed to catalyze the first step in nodulisporic acid biosynthesis via conversion of farnesyl pyrophosphate and isopentyl pyrophosphate into geranylgeranyl pyrophosphate (GGPP). Condensation of indole-3-glycerol phosphate with GGPP by the prenyl transferase nodC then forms 3-geranylgeranylindole (3-GGI). Epoxidation by the FAD-dependent monooxygenase nodM leads to a single-epoxidized-GGI that is substrate of the terpene cyclase nodB for cyclization to yield emindole SB. The terminal methyl carbon, C28, of emindole SB is then oxidized by the cytochrome P450 monooxygenase nodW to produce nodulisporic acid F (NAF), the pentacyclic core of NAA. NAF is converted to nodulisporic acid E (NAE) via prenylation. This step is probably performed by one of the indole diterpene prenyltransferases nodD1 or nodD2. Several oxidation steps performed by the FAD-linked oxidoreductase nodO and one of the cytochrome P450 monooxygenase nodR, nodX or nodZ further convert NAE to nodulisporic acid D (NAD). NAD is substrate of cytochrome P450 monooxygenase nodJ to produce the precursor of nodulisporic acid C (NAC), converted to NAC by one of the indole diterpene prenyltransferases nodD1 or nodD2. The FAD-dependent monooxygenase nodY2 then oxidizes NAC to nodulisporic acid B (NAB). Finally NAB is converted to NAA by one of the cytochrome P450 monooxygenases nodR, nodX or nodZ. This Hypoxylon pulicicidum protein is Indole diterpene prenyltransferase nodD2.